The sequence spans 174 residues: Neuromedin-U (174 aa).

The first 37 residues, 1–37 (MSRAAGHRPGLSAGQLAAATASPLLSLLLLLACCADA), serve as a signal peptide directing secretion. A propeptide spanning residues 38-105 (CKGVPISPQR…EQSEKDNTKR (68 aa)) is cleaved from the precursor. Met-141 bears the Methionine sulfoxide; partial mark. The residue at position 166 (Asn-166) is an Asparagine amide. The propeptide occupies 170 to 174 (STSFI).

Belongs to the NmU family.

The protein resides in the secreted. Its function is as follows. Ligand for receptors NMUR1 and NMUR2. Stimulates muscle contractions of specific regions of the gastrointestinal tract. In terms of biological role, does not function as a ligand for either NMUR1 or NMUR2. Indirectly induces prolactin release although its potency is much lower than that of neuromedin precursor-related peptide 36. Does not function as a ligand for either NMUR1 or NMUR2. Indirectly induces prolactin release from lactotroph cells in the pituitary gland, probably via the hypothalamic dopaminergic system. Functionally, stimulates muscle contractions of specific regions of the gastrointestinal tract. The sequence is that of Neuromedin-U (Nmu) from Mus musculus (Mouse).